A 341-amino-acid chain; its full sequence is MSNSNRPAVVITDSTLRDGNHAVSHQLRASDIASYCQWAEAAHVPIVEVGHGNGLAASSLQVGLAACSDQMMLETARMHLKTSRLGIHVIPGFATVAKDLKPALDLGVDVVRVASHCTEADITERHIGYCRDQGKTVFGVLMMSHMAEVPVLCEEAKKLEAYGAEAVIIMDSSGTYLPLDVTRRVSALKESIGIGVGFHAHNNLGMAIANSIAAIEAGAVLIDGSIRGFGAGAGNAQLETLVAVLERLGVATGIDLYRVLDAGDFAETLFVKELPVVRSLSIVSGLSGVFSGFSKPVLRIASENGVDPRDVFFELGRRRAVAGQEDLILEVVKEIKSRGNR.

Residues 9-260 (VVITDSTLRD…ATGIDLYRVL (252 aa)) form the Pyruvate carboxyltransferase domain. 17 to 18 (RD) provides a ligand contact to substrate. Mn(2+) is bound at residue aspartate 18. Residue histidine 21 is the Proton acceptor of the active site. Residues serine 172 and histidine 199 each contribute to the substrate site. The Mn(2+) site is built by histidine 199 and histidine 201.

The protein belongs to the 4-hydroxy-2-oxovalerate aldolase family.

It carries out the reaction (S)-4-hydroxy-2-oxopentanoate = acetaldehyde + pyruvate. The protein is 4-hydroxy-2-oxovalerate aldolase of Spirochaeta aurantia.